The primary structure comprises 79 residues: Sec-independent protein translocase protein TatA (79 aa).

The chain crosses the membrane as a helical span at residues 1–21 (MGGISIWQLLIIALIVILLFG). The tract at residues 42 to 79 (AMTSETSEEEKKALEDSQTAQTSQQAEKKPESKDKEQA) is disordered. Residues 57–66 (DSQTAQTSQQ) are compositionally biased toward polar residues. Over residues 67-79 (AEKKPESKDKEQA) the composition is skewed to basic and acidic residues.

Belongs to the TatA/E family. As to quaternary structure, the Tat system comprises two distinct complexes: a TatABC complex, containing multiple copies of TatA, TatB and TatC subunits, and a separate TatA complex, containing only TatA subunits. Substrates initially bind to the TatABC complex, which probably triggers association of the separate TatA complex to form the active translocon.

The protein resides in the cell inner membrane. Its function is as follows. Part of the twin-arginine translocation (Tat) system that transports large folded proteins containing a characteristic twin-arginine motif in their signal peptide across membranes. TatA could form the protein-conducting channel of the Tat system. This is Sec-independent protein translocase protein TatA from Shewanella denitrificans (strain OS217 / ATCC BAA-1090 / DSM 15013).